A 769-amino-acid chain; its full sequence is Serine protease HtrA-like (769 aa).

Over residues 1 to 20 (MDIGKKHVIPKSQYRRKRRE) the composition is skewed to basic residues. Positions 1 to 390 (MDIGKKHVIP…ATSKLNKGRA (390 aa)) are disordered. 2 stretches are compositionally biased toward basic and acidic residues: residues 21-64 (FFHN…ERFK) and 71-108 (LEQRNRDVNENKAEESKSNQDSKSAYNRDHYLTDDVSK). A compositionally biased stretch (polar residues) spans 126–137 (YEQNSEATLSTK). Basic and acidic residues predominate over residues 138-186 (STDKVESTEMRKLSSDKNKVGHEEQHVLSKPSEHDKETRIDSESSRTDS). The segment covering 247-262 (QQSQNEQTKTYTYGDS) has biased composition (polar residues). 2 stretches are compositionally biased toward basic and acidic residues: residues 264 to 296 (QNDKSNHENDLSHHIPSISDDKDNVMRENHIVD) and 310 to 330 (KTDDDRKLDEKIHVEDKHKQN). The span at 331-347 (ADSSETVGYQSQSTASH) shows a compositional bias: polar residues. Positions 348 to 364 (RSTEKRNISINDHDKLN) are enriched in basic and acidic residues. Positions 365–390 (GQKTNTKTSANNNQKKATSKLNKGRA) are enriched in polar residues. Residues 410-430 (LVILMGIIILIVILNAIFNNV) traverse the membrane as a helical segment. Residues histidine 504, aspartate 534, and serine 619 each act as charge relay system in the active site. The 54-residue stretch at 680-733 (IASLNSFERQAVKLPGKVKNGVVVDQVDNNGLADQSGLKKGDVITELDGKLLED) folds into the PDZ domain.

It belongs to the peptidase S1C family.

It is found in the cell membrane. This chain is Serine protease HtrA-like, found in Staphylococcus aureus (strain COL).